The chain runs to 444 residues: N-succinylarginine dihydrolase (444 aa).

Substrate is bound by residues 19-28 (AGLSFGNVAS), asparagine 110, and 137-138 (HR). The active site involves glutamate 174. Residue arginine 214 coordinates substrate. Histidine 250 is an active-site residue. Substrate-binding residues include aspartate 252 and asparagine 362. Catalysis depends on cysteine 368, which acts as the Nucleophile.

This sequence belongs to the succinylarginine dihydrolase family. In terms of assembly, homodimer.

It carries out the reaction N(2)-succinyl-L-arginine + 2 H2O + 2 H(+) = N(2)-succinyl-L-ornithine + 2 NH4(+) + CO2. It participates in amino-acid degradation; L-arginine degradation via AST pathway; L-glutamate and succinate from L-arginine: step 2/5. In terms of biological role, catalyzes the hydrolysis of N(2)-succinylarginine into N(2)-succinylornithine, ammonia and CO(2). This chain is N-succinylarginine dihydrolase, found in Shewanella denitrificans (strain OS217 / ATCC BAA-1090 / DSM 15013).